A 208-amino-acid chain; its full sequence is Ion-translocating oxidoreductase complex subunit G (208 aa).

A helical transmembrane segment spans residues 9–29; that stretch reads GVTLAVFAALTTGLTAMVNAL. T174 is subject to FMN phosphoryl threonine.

It belongs to the RnfG family. The complex is composed of six subunits: RnfA, RnfB, RnfC, RnfD, RnfE and RnfG. FMN serves as cofactor.

The protein resides in the cell inner membrane. Functionally, part of a membrane-bound complex that couples electron transfer with translocation of ions across the membrane. The protein is Ion-translocating oxidoreductase complex subunit G of Cronobacter sakazakii (strain ATCC BAA-894) (Enterobacter sakazakii).